Here is a 346-residue protein sequence, read N- to C-terminus: Methylthioribose-1-phosphate isomerase (346 aa).

Residues 54–56, Arg-91, and Gln-192 contribute to the substrate site; that span reads RGA. The Proton donor role is filled by Asp-233. 243-244 provides a ligand contact to substrate; sequence NK.

This sequence belongs to the eIF-2B alpha/beta/delta subunits family. MtnA subfamily.

The enzyme catalyses 5-(methylsulfanyl)-alpha-D-ribose 1-phosphate = 5-(methylsulfanyl)-D-ribulose 1-phosphate. Its pathway is amino-acid biosynthesis; L-methionine biosynthesis via salvage pathway; L-methionine from S-methyl-5-thio-alpha-D-ribose 1-phosphate: step 1/6. Its function is as follows. Catalyzes the interconversion of methylthioribose-1-phosphate (MTR-1-P) into methylthioribulose-1-phosphate (MTRu-1-P). This Yersinia pseudotuberculosis serotype IB (strain PB1/+) protein is Methylthioribose-1-phosphate isomerase.